The following is a 145-amino-acid chain: UPF0260 protein VC_1058 (145 aa).

It belongs to the UPF0260 family.

The sequence is that of UPF0260 protein VC_1058 from Vibrio cholerae serotype O1 (strain ATCC 39315 / El Tor Inaba N16961).